The sequence spans 524 residues: Mitochondrial-processing peptidase subunit alpha (524 aa).

The N-terminal 32 residues, 1–32 (MATAVWAAARLLRGSAALCARPKFGSPAHRRF), are a transit peptide targeting the mitochondrion. N6-succinyllysine is present on Lys-63.

It belongs to the peptidase M16 family. As to quaternary structure, heterodimer of PMPCA (alpha) and PMPCB (beta) subunits, forming the mitochondrial processing protease (MPP) in which PMPCA is involved in substrate recognition and binding and PMPCB is the catalytic subunit.

The protein localises to the mitochondrion matrix. It is found in the mitochondrion inner membrane. In terms of biological role, substrate recognition and binding subunit of the essential mitochondrial processing protease (MPP), which cleaves the mitochondrial sequence off newly imported precursors proteins. The protein is Mitochondrial-processing peptidase subunit alpha (Pmpca) of Rattus norvegicus (Rat).